We begin with the raw amino-acid sequence, 479 residues long: Ribosomal RNA small subunit methyltransferase F (479 aa).

Residues 125–131 (AAAPGSK), Glu-149, Asp-176, and Asp-194 each bind S-adenosyl-L-methionine. Catalysis depends on Cys-247, which acts as the Nucleophile.

It belongs to the class I-like SAM-binding methyltransferase superfamily. RsmB/NOP family.

Its subcellular location is the cytoplasm. The catalysed reaction is cytidine(1407) in 16S rRNA + S-adenosyl-L-methionine = 5-methylcytidine(1407) in 16S rRNA + S-adenosyl-L-homocysteine + H(+). In terms of biological role, specifically methylates the cytosine at position 1407 (m5C1407) of 16S rRNA. This is Ribosomal RNA small subunit methyltransferase F from Escherichia coli O127:H6 (strain E2348/69 / EPEC).